The following is a 371-amino-acid chain: Protein RecA (371 aa).

Residue 75-82 coordinates ATP; sequence GPESSGKT. The tract at residues 343-371 is disordered; that stretch reads KAKDEPIADEDQPIDVVPNFDDQDVEPQN.

It belongs to the RecA family.

Its subcellular location is the cytoplasm. Functionally, can catalyze the hydrolysis of ATP in the presence of single-stranded DNA, the ATP-dependent uptake of single-stranded DNA by duplex DNA, and the ATP-dependent hybridization of homologous single-stranded DNAs. It interacts with LexA causing its activation and leading to its autocatalytic cleavage. This is Protein RecA from Corynebacterium urealyticum (strain ATCC 43042 / DSM 7109).